The chain runs to 1433 residues: Probable ATP-dependent RNA helicase spindle-E (1433 aa).

One can recognise a Helicase ATP-binding domain in the interval isoleucine 126 to valine 294. Glycine 139–threonine 146 lines the ATP pocket. The DEAH box signature appears at aspartate 240–histidine 243. Residues threonine 355–lysine 526 enclose the Helicase C-terminal domain. One can recognise a Tudor domain in the interval alanine 935–histidine 998.

Belongs to the DEAD box helicase family. DEAH subfamily.

Its subcellular location is the cytoplasm. The enzyme catalyses ATP + H2O = ADP + phosphate + H(+). Its function is as follows. Probable ATP-binding RNA helicase which plays a central role during spermatogenesis and oogenesis by repressing transposable elements and preventing their mobilization, which is essential for the germline integrity. Acts via the piRNA metabolic process, which mediates the repression of transposable elements during meiosis by forming complexes composed of piRNAs and Piwi and govern the methylation and subsequent repression of transposons. Involved in the repression of LTR retrotransposon copia. Also involved in telomere regulation by repressing specialized telomeric retroelements HeT-A, TAHRE, and TART; Drosophila telomeres being maintained by transposition of specialized telomeric retroelements. Involved in telomeric trans-silencing, a repression mechanism by which a transposon or a transgene inserted in subtelomeric heterochromatin has the capacity to repress in trans in the female germline, a homologous transposon, or transgene located in euchromatin. Involved in the repression of testis-expressed Stellate genes by the homologous Su(Ste) repeats. Required for anteroposterior and dorsoventral axis formation during oogenesis. This chain is Probable ATP-dependent RNA helicase spindle-E (spn-E), found in Drosophila pseudoobscura pseudoobscura (Fruit fly).